Here is a 1843-residue protein sequence, read N- to C-terminus: GTPase-activating protein CdGAPr (1843 aa).

The disordered stretch occupies residues 94–117 (ASTESSCSPPIQGAVPPPKPSRHM). Phosphoserine occurs at positions 166, 168, and 180. In terms of domain architecture, SH3 spans 295 to 363 (PAVGAAYGVR…PQSCVATIGD (69 aa)). The 195-residue stretch at 424 to 618 (CDLSEHLLNS…YLIRNCHNIF (195 aa)) folds into the Rho-GAP domain. The segment at 746–780 (PRSWQKRKPDKTPSWKSIFSRSQRQGNPDPGQKIT) is disordered. A compositionally biased stretch (polar residues) spans 759 to 771 (SWKSIFSRSQRQG). Phosphoserine occurs at positions 837 and 840. Residue Thr843 is modified to Phosphothreonine. A phosphoserine mark is found at Ser851, Ser861, Ser872, and Ser876. Disordered regions lie at residues 894–975 (ESES…GHES) and 1013–1106 (ASVE…RVEP). The span at 928 to 939 (FSSQTNSVNPSP) shows a compositional bias: polar residues. The residue at position 1029 (Ser1029) is a Phosphoserine. Positions 1029 to 1053 (SPISSSNGASVGSSSSSTRYSYPSV) are enriched in low complexity. The segment covering 1058–1069 (KRKEQQDAKERF) has biased composition (basic and acidic residues). The segment covering 1071–1097 (YQGTFTQPGQKQESSAPRPVHSTNNGA) has biased composition (polar residues). Phosphothreonine occurs at positions 1118 and 1121. Ser1125, Ser1216, Ser1281, and Ser1284 each carry phosphoserine. The stretch at 1378 to 1404 (YKAAEMTQQLLQLEQEHHDHEEQQEKE) forms a coiled coil. Residues Ser1453 and Ser1456 each carry the phosphoserine modification. Position 1679 is a phosphothreonine (Thr1679). Disordered regions lie at residues 1721-1745 (TGGG…LGQQ) and 1779-1829 (TAQK…QFSI). Residues 1779 to 1790 (TAQKYGSTSKTP) show a composition bias toward polar residues. Positions 1793–1806 (KFERSQPMPRDRLQ) are enriched in basic and acidic residues. Over residues 1807–1818 (RNSLAESNAGTN) the composition is skewed to polar residues.

As to expression, ubiquitously expressed.

Probably functions as a GTPase-activating protein (GAP) for RAC1 and/or CDC42. Required for optic stalk formation. This chain is GTPase-activating protein CdGAPr (CdGAPr), found in Drosophila melanogaster (Fruit fly).